The chain runs to 93 residues: Alpha-defensin 9 (93 aa).

Positions 1 to 19 (MKTLVLLSALVLLAFQVQA) are cleaved as a signal peptide. The propeptide occupies 20 to 58 (DPIQNTDEETKTEEQPGEEDQAVSVSFGDPEGSSLQEES). Positions 23-56 (QNTDEETKTEEQPGEEDQAVSVSFGDPEGSSLQE) are disordered. Intrachain disulfides connect cysteine 64/cysteine 92, cysteine 66/cysteine 81, and cysteine 71/cysteine 91.

This sequence belongs to the alpha-defensin family. Paneth cells of the small bowel.

The protein resides in the secreted. In terms of biological role, probably contributes to the antimicrobial barrier function of the small bowel mucosa. This chain is Alpha-defensin 9 (Defa9), found in Mus musculus (Mouse).